Here is a 563-residue protein sequence, read N- to C-terminus: Solute carrier family 22 member 1 (563 aa).

Over 1-21 the chain is Cytoplasmic; the sequence is MLTVDDVLEQVGEFGWFQKQT. The helical transmembrane segment at 22 to 42 threads the bilayer; the sequence is FLILCLLSAAFAPIYVGIVFL. The Extracellular segment spans residues 43–144; sequence AFTPDHRCRS…LVCDDSWKVD (102 aa). An N-linked (GlcNAc...) asparagine glycan is attached at Asn-71. A helical membrane pass occupies residues 145-165; the sequence is LFQSCVNLGFFLGSLGVGYIA. At 166–171 the chain is on the cytoplasmic side; the sequence is DRFGRK. A helical transmembrane segment spans residues 172-192; sequence VCLLATTLTCASLGVLTAVAP. At 193–196 the chain is on the extracellular side; that stretch reads DYTS. The helical transmembrane segment at 197-219 threads the bilayer; the sequence is LLIFRLLQGLVSKGSWTAGYTLI. Residues 220 to 232 lie on the Cytoplasmic side of the membrane; that stretch reads TEFVGLGYRRTVA. A helical membrane pass occupies residues 233 to 253; it reads ILYQMAFTVGLVLLSGLAYIL. The Extracellular portion of the chain corresponds to 254 to 257; it reads PHWR. Residues 258–278 traverse the membrane as a helical segment; the sequence is WLQLAVSLPIFLLLFRFWFVP. Residues 278-282 carry the Proline-rich sequence motif; sequence PESPR. Residues 279 to 342 are Cytoplasmic-facing; that stretch reads ESPRWLLSQK…FRTPNLRKYT (64 aa). Ser-328 bears the Phosphoserine mark. Residues 343–363 form a helical membrane-spanning segment; the sequence is FILMYLWFTSSVVYQGLIMHV. Topologically, residues 364-371 are extracellular; that stretch reads GATGGNLY. The chain crosses the membrane as a helical span at residues 372–392; sequence LDFLYSALVEFPAGFIILVTI. At 393-398 the chain is on the cytoplasmic side; that stretch reads DRFGRR. Residues 399-418 traverse the membrane as a helical segment; that stretch reads YPLATSNLAAGLACFLMIFI. Over 419 to 423 the chain is Extracellular; that stretch reads PHDLP. A helical membrane pass occupies residues 424-446; sequence WLNIMVACVGRMGITIVFQMVCL. The Cytoplasmic portion of the chain corresponds to 447 to 459; it reads VNAELFPTFIRNL. The helical transmembrane segment at 460 to 480 threads the bilayer; that stretch reads GMMVCSSLCDLGGVLTPFLVF. Topologically, residues 481 to 487 are extracellular; sequence RLMEVWQ. The chain crosses the membrane as a helical span at residues 488–508; that stretch reads GSPLILFAALGLVAGGMTLLL. The Cytoplasmic segment spans residues 509–563; the sequence is PETKGVTLPETIEDAENLQRKAKPKENKIYLQVQTSELNTQAAERDASQGTAQQK.

It belongs to the major facilitator (TC 2.A.1) superfamily. Organic cation transporter (TC 2.A.1.19) family. Phosphorylated.

It is found in the basolateral cell membrane. Its subcellular location is the apical cell membrane. The protein localises to the lateral cell membrane. The protein resides in the basal cell membrane. It localises to the cell membrane. It catalyses the reaction 1-methylnicotinamide(out) = 1-methylnicotinamide(in). It carries out the reaction dopamine(out) = dopamine(in). The catalysed reaction is serotonin(out) = serotonin(in). The enzyme catalyses (R)-adrenaline(out) = (R)-adrenaline(in). It catalyses the reaction (R)-noradrenaline(out) = (R)-noradrenaline(in). It carries out the reaction histamine(out) = histamine(in). The catalysed reaction is guanidine(out) = guanidine(in). The enzyme catalyses choline(out) = choline(in). It catalyses the reaction acetylcholine(in) = acetylcholine(out). It carries out the reaction thiamine(in) = thiamine(out). The catalysed reaction is spermidine(in) = spermidine(out). The enzyme catalyses agmatine(out) = agmatine(in). It catalyses the reaction putrescine(out) = putrescine(in). It carries out the reaction (R)-carnitine(in) = (R)-carnitine(out). The catalysed reaction is O-isobutanoyl-(R)-carnitine(in) = O-isobutanoyl-(R)-carnitine(out). The enzyme catalyses O-acetyl-(R)-carnitine(in) = O-acetyl-(R)-carnitine(out). It catalyses the reaction O-3-hydroxybutanoyl-(R)-carnitine(in) = O-3-hydroxybutanoyl-(R)-carnitine(out). It carries out the reaction O-propanoyl-(R)-carnitine(in) = O-propanoyl-(R)-carnitine(out). The catalysed reaction is O-butanoyl-(R)-carnitine(in) = O-butanoyl-(R)-carnitine(out). The enzyme catalyses O-2-methylbutanoyl-(R)-carnitine(in) = O-2-methylbutanoyl-(R)-carnitine(out). It catalyses the reaction O-3-methylbutanoyl-(R)-carnitine(in) = O-3-methylbutanoyl-(R)-carnitine(out). It carries out the reaction O-hexanoyl-(R)-carnitine(in) = O-hexanoyl-(R)-carnitine(out). The catalysed reaction is L-histidyl-L-proline diketopiperazine(in) = L-histidyl-L-proline diketopiperazine(out). The enzyme catalyses (R)-salsolinol(in) = (R)-salsolinol(out). It catalyses the reaction prostaglandin F2alpha(out) = prostaglandin F2alpha(in). It carries out the reaction prostaglandin E2(out) = prostaglandin E2(in). Its activity is regulated as follows. Phosphorylation of the transporter leads to changes in its substrate affinity, resulting in a regulation of the transport activity. In contrast with rat ortholog, ASP uptake is inhibited by protein kinase A (PKA) and C (PKC) activation. ASP uptake is also endogenously activated by calmodulin, the calmodulin-dependent kinase II and LCK tyrosine kinase. Inhibited by cGMP, most likely through a cGMP-binding protein that interacts with OCT1. Its function is as follows. Electrogenic voltage-dependent transporter that mediates the transport of a variety of organic cations such as endogenous bioactive amines, cationic drugs and xenobiotics. Functions as a pH- and Na(+)-independent, bidirectional transporter. Cation cellular uptake or release is driven by the electrochemical potential (i.e. membrane potential and concentration gradient) and substrate selectivity. Hydrophobicity is a major requirement for recognition in polyvalent substrates and inhibitors. Primarily expressed in the basolateral membrane of hepatocytes and proximal tubules and involved in the uptake and disposition of cationic compounds from the blood by hepatic and renal clearance. Most likely functions as an uptake carrier in enterocytes contributing to the intestinal elimination of organic cations from the systemic circulation. Transports endogenous monoamines such as N-1-methylnicotinamide (NMN), guanidine, neurotransmitters dopamine, serotonin, noradrenaline, adrenaline and histamine, and quaternary ammonium compound such as choline. Also transports natural polyamines such as spermidine, agmatine and putrescine at low affinity, but relatively high turnover. Involved in the hepatic and intestinal uptake of the vitamin B1/thiamine, hence regulating hepatic lipid and energy metabolism. Contributes to the influx and efflux of fatty acid carriers carnitines and acylcarnitines across the basolateral membrane of hepatocytes, from the liver to the systemic circulation and inversely and may be involved in regulating the systemic availability of hepatic acylcarnitines. Also capable of transporting non-amine endogenous compounds such as prostaglandin E2 (PGE2) and prostaglandin F2-alpha (PGF2-alpha). May contribute to the transport of cationic compounds in testes across the blood-testis-barrier. Also mediates the uptake of xenobiotics tributylmethylammonium (TBuMA), quinidine, N-methyl-quinine (NMQ), N-methyl-quinidine (NMQD) N-(4,4-azo-n-pentyl)-quinuclidine (APQ), azidoprocainamide methoiodide (AMP), N-(4,4-azo-n-pentyl)-21-deoxyajmalinium (APDA) and 4-(4-(dimethylamino)styryl)-N-methylpyridinium (ASP). The sequence is that of Solute carrier family 22 member 1 (SLC22A1) from Bos taurus (Bovine).